We begin with the raw amino-acid sequence, 461 residues long: Probable protein phosphatase 2C 40 (461 aa).

Positions 34–63 (REASAERASASASAGAGGRERERRPSVAAG) are disordered. In terms of domain architecture, PPM-type phosphatase spans 57–321 (RPSVAAGQAC…DDTTCIVIDI (265 aa)). Mn(2+) is bound by residues Asp-98, Gly-99, Asp-273, and Asp-312. A compositionally biased stretch (basic and acidic residues) spans 439-453 (KKEAMEGKRHSRDSS). The tract at residues 439–461 (KKEAMEGKRHSRDSSSRNSGSSE) is disordered.

The protein belongs to the PP2C family. Mg(2+) is required as a cofactor. The cofactor is Mn(2+). Expressed in leaves, leaf sheaths, panicles, nodes and internodes. Expressed at low levels in roots and stems.

The protein resides in the nucleus. It is found in the cytoplasm. It catalyses the reaction O-phospho-L-seryl-[protein] + H2O = L-seryl-[protein] + phosphate. The catalysed reaction is O-phospho-L-threonyl-[protein] + H2O = L-threonyl-[protein] + phosphate. Its function is as follows. Mediates the negative regulation of osmotic and salt stress tolerance through regulation of the jasmonate and abscisic acid signaling pathways and modulation of the raffinose family oligosaccharide metabolism pathway. This is Probable protein phosphatase 2C 40 from Oryza sativa subsp. japonica (Rice).